Consider the following 575-residue polypeptide: Delta-selinene-like synthase, chloroplastic (575 aa).

(2E,6E)-farnesyl diphosphate is bound by residues Arg288, Asp325, Asp329, Arg466, and Asp469. Mg(2+)-binding residues include Asp325 and Asp329. The DDXXD motif motif lies at 325–329 (DDLYD). Asp469 and Glu477 together coordinate Mg(2+).

It belongs to the terpene synthase family. Tpsb subfamily. In terms of assembly, monomer. Mg(2+) is required as a cofactor. The cofactor is Mn(2+).

It localises to the plastid. Its subcellular location is the chloroplast. The catalysed reaction is (2E,6E)-farnesyl diphosphate = (+)-delta-selinene + diphosphate. Its pathway is secondary metabolite biosynthesis; terpenoid biosynthesis. The protein operates within terpene metabolism; oleoresin biosynthesis. Its function is as follows. Sesquiterpene synthase (sesqui-TPS) involved in the biosynthesis of sesquiterpene natural products. Catalyzes the conversion of (2E)-geranyl diphosphate (GPP) into delta-selinene. The sequence is that of Delta-selinene-like synthase, chloroplastic from Picea sitchensis (Sitka spruce).